Here is a 210-residue protein sequence, read N- to C-terminus: Scoloptoxin SSD552 (210 aa).

An N-terminal signal peptide occupies residues 1-23 (MNILLSSTLFVLLMFQIIGSGMG).

Contains 3 disulfide bonds. Expressed by the venom gland.

Its subcellular location is the secreted. In Scolopendra dehaani (Thai centipede), this protein is Scoloptoxin SSD552.